The following is a 200-amino-acid chain: Imidazole glycerol phosphate synthase subunit HisH (200 aa).

Residues 3-200 (EVALIDAGGA…LRNFLEMDAA (198 aa)) enclose the Glutamine amidotransferase type-1 domain. C78 serves as the catalytic Nucleophile. Active-site residues include H179 and E181.

As to quaternary structure, heterodimer of HisH and HisF.

The protein resides in the cytoplasm. It catalyses the reaction 5-[(5-phospho-1-deoxy-D-ribulos-1-ylimino)methylamino]-1-(5-phospho-beta-D-ribosyl)imidazole-4-carboxamide + L-glutamine = D-erythro-1-(imidazol-4-yl)glycerol 3-phosphate + 5-amino-1-(5-phospho-beta-D-ribosyl)imidazole-4-carboxamide + L-glutamate + H(+). The catalysed reaction is L-glutamine + H2O = L-glutamate + NH4(+). It participates in amino-acid biosynthesis; L-histidine biosynthesis; L-histidine from 5-phospho-alpha-D-ribose 1-diphosphate: step 5/9. In terms of biological role, IGPS catalyzes the conversion of PRFAR and glutamine to IGP, AICAR and glutamate. The HisH subunit catalyzes the hydrolysis of glutamine to glutamate and ammonia as part of the synthesis of IGP and AICAR. The resulting ammonia molecule is channeled to the active site of HisF. The sequence is that of Imidazole glycerol phosphate synthase subunit HisH from Xylella fastidiosa (strain Temecula1 / ATCC 700964).